The chain runs to 103 residues: Large ribosomal subunit protein uL24 (103 aa).

The protein belongs to the universal ribosomal protein uL24 family. As to quaternary structure, part of the 50S ribosomal subunit.

Its function is as follows. One of two assembly initiator proteins, it binds directly to the 5'-end of the 23S rRNA, where it nucleates assembly of the 50S subunit. Functionally, one of the proteins that surrounds the polypeptide exit tunnel on the outside of the subunit. The protein is Large ribosomal subunit protein uL24 of Brucella abortus (strain S19).